The sequence spans 704 residues: Polyribonucleotide nucleotidyltransferase (704 aa).

Mg(2+) contacts are provided by D486 and D492. Residues 553–612 (PRIYTMKINPEKIKDVIGKGGSVIRALTDETGTTIEIEDDGTIKIAATDGDKAKHAIRRI) form the KH domain. In terms of domain architecture, S1 motif spans 622 to 690 (GRIYAGKVTR…RQGRIRLSIK (69 aa)).

Belongs to the polyribonucleotide nucleotidyltransferase family. In terms of assembly, component of the RNA degradosome, which is a multiprotein complex involved in RNA processing and mRNA degradation. Mg(2+) serves as cofactor.

It is found in the cytoplasm. The catalysed reaction is RNA(n+1) + phosphate = RNA(n) + a ribonucleoside 5'-diphosphate. Functionally, involved in mRNA degradation. Catalyzes the phosphorolysis of single-stranded polyribonucleotides processively in the 3'- to 5'-direction. The protein is Polyribonucleotide nucleotidyltransferase of Yersinia pseudotuberculosis serotype IB (strain PB1/+).